A 466-amino-acid polypeptide reads, in one-letter code: Cysteine--tRNA ligase (466 aa).

C28 contributes to the Zn(2+) binding site. A 'HIGH' region motif is present at residues 30–40; that stretch reads PTVYNYIHIGN. Zn(2+) contacts are provided by C208, H233, and E237. The 'KMSKS' region signature appears at 265-269; it reads KMSKS. K268 is an ATP binding site.

Belongs to the class-I aminoacyl-tRNA synthetase family. In terms of assembly, monomer. Requires Zn(2+) as cofactor.

Its subcellular location is the cytoplasm. The enzyme catalyses tRNA(Cys) + L-cysteine + ATP = L-cysteinyl-tRNA(Cys) + AMP + diphosphate. The chain is Cysteine--tRNA ligase from Staphylococcus aureus (strain USA300).